A 206-amino-acid chain; its full sequence is Small ribosomal subunit protein uS4 (206 aa).

Positions 28–48 (YMERRPYGPGEHGRARKKQDS) are disordered. Positions 95 to 160 (MRLDALVLRA…MPPFQVAAAG (66 aa)) constitute an S4 RNA-binding domain.

The protein belongs to the universal ribosomal protein uS4 family. Part of the 30S ribosomal subunit. Contacts protein S5. The interaction surface between S4 and S5 is involved in control of translational fidelity.

Functionally, one of the primary rRNA binding proteins, it binds directly to 16S rRNA where it nucleates assembly of the body of the 30S subunit. Its function is as follows. With S5 and S12 plays an important role in translational accuracy. The sequence is that of Small ribosomal subunit protein uS4 from Paenarthrobacter aurescens (strain TC1).